Consider the following 540-residue polypeptide: Chaperonin GroEL (540 aa).

ATP is bound by residues 30–33, K51, 87–91, G415, 479–481, and D495; these read TLGP, DGTTT, and NAA.

It belongs to the chaperonin (HSP60) family. Forms a cylinder of 14 subunits composed of two heptameric rings stacked back-to-back. Interacts with the co-chaperonin GroES.

Its subcellular location is the cytoplasm. The catalysed reaction is ATP + H2O + a folded polypeptide = ADP + phosphate + an unfolded polypeptide.. Together with its co-chaperonin GroES, plays an essential role in assisting protein folding. The GroEL-GroES system forms a nano-cage that allows encapsulation of the non-native substrate proteins and provides a physical environment optimized to promote and accelerate protein folding. This chain is Chaperonin GroEL, found in Pluralibacter gergoviae (Enterobacter gergoviae).